Here is a 326-residue protein sequence, read N- to C-terminus: Phenylalanine--tRNA ligase alpha subunit (326 aa).

A Mg(2+)-binding site is contributed by E251.

Belongs to the class-II aminoacyl-tRNA synthetase family. Phe-tRNA synthetase alpha subunit type 1 subfamily. As to quaternary structure, tetramer of two alpha and two beta subunits. Mg(2+) serves as cofactor.

It localises to the cytoplasm. It catalyses the reaction tRNA(Phe) + L-phenylalanine + ATP = L-phenylalanyl-tRNA(Phe) + AMP + diphosphate + H(+). In Alteromonas mediterranea (strain DSM 17117 / CIP 110805 / LMG 28347 / Deep ecotype), this protein is Phenylalanine--tRNA ligase alpha subunit.